The primary structure comprises 565 residues: Perivitellin-2 67 kDa subunit (565 aa).

An N-terminal signal peptide occupies residues 1–26; that stretch reads MSQLRWWVVSQLLLLIVVCILDHSEG. The region spanning 27-340 is the MACPF domain; the sequence is ARVCPKIVPG…AKVANLDRLT (314 aa).

In terms of assembly, perivitellin-2 is a heterooctamer of 4 identical 98 kDa heterodimers, each composed of one 31 kDa and one 67 kDa subunits. The 98 kDa heterodimer subunits are held together by disulfide bridges while the heterodimers are assembled into the native perivitellin-2 octamer by non-covalent forces. Glycosylated. Contains four O-linked and one N-linked oligosaccharide bonds. The protein contains 2.5% of carbohydrates (high levels of mannose, galactose, and NAcGlucosamine, and small amounts of NacGalactosamine). In terms of processing, PV2 is a very high density lipoprotein (VHDL). It contains 3.75% of lipids. The major lipid classes are free sterols and phospholipids and also have significant quantities of energy-providing triacylglycerides and free fatty acids. As to expression, produced by albumen secretory cells. Found in developing eggs.

The protein localises to the secreted. It is found in the target cell membrane. The egg defensive protein perivitellin-2 is a pore-forming two-subunit glycoprotein that affects both the nervous and digestive systems of mammals. In addition, it is a source of both structural and energetic molecules during embryonic development. The tachylectin subunit (31 kDa) binds target membranes while the MACPF subunit (67 kDa) disrupts lipid bilayers forming large pores altering the plasma membrance conductance. Both in vivo and in vitro, the protein shows wide pH range stability and is resistant to enzymatic proteolysis from gastrointestinal environments. It specifically binds mature enterocytes but does not cause cell disruption on caco-2 (human colorectal adenocarcinoma cells) or rat intestinal cells. After oral administration to mice, it binds enterocytes and induces large dose-dependent morphological changes on their small intestine mucosa, reducing the absorptive surface. Additionally, it is detected in the Peyer's patches where it activates lymphoid follicles and triggers apoptosis. The toxin can also traverse the intestinal barrier and induce oral adaptive immunity with evidence of circulating antibody response. The toxin also shows hemagglutination properties thanks to the tachylectin subunit, but does not show hemolytic activity. In addition to enterotoxin activity, the toxin also acts as a neurotoxin, since an intraperitoneal injection induces paralysis of the mice rear limbs, followed by death. The sequence is that of Perivitellin-2 67 kDa subunit from Pomacea canaliculata (Golden apple snail).